The primary structure comprises 840 residues: Translation initiation factor IF-2 (840 aa).

Disordered stretches follow at residues 94–157 and 169–256; these read KRSP…AGAE and PVAK…PTGP. Residues 95-143 are compositionally biased toward basic and acidic residues; sequence RSPDEIEAERQRELEEQRAAEEAERLKAEEAAARQRAEEEARKAEEAAR. Residues 144–157 are compositionally biased toward low complexity; it reads AKAAQEAAATAGAE. Basic and acidic residues-rich tracts occupy residues 175–191 and 223–232; these read AVEERKKEEPRRAPKRD and STDEESDGYR. Residues 233-247 show a composition bias toward basic residues; it reads RGGRGGKSKLKKRNQ. A tr-type G domain is found at 340–509; that stretch reads TRAPVVTVMG…LLQAEVLELK (170 aa). Residues 349-356 are G1; that stretch reads GHVDHGKT. GTP is bound at residue 349–356; the sequence is GHVDHGKT. The G2 stretch occupies residues 374–378; sequence GITQH. A G3 region spans residues 395 to 398; the sequence is DTPG. GTP-binding positions include 395 to 399 and 449 to 452; these read DTPGH and NKID. The G4 stretch occupies residues 449–452; the sequence is NKID. Positions 485-487 are G5; that stretch reads SAK.

It belongs to the TRAFAC class translation factor GTPase superfamily. Classic translation factor GTPase family. IF-2 subfamily.

Its subcellular location is the cytoplasm. Functionally, one of the essential components for the initiation of protein synthesis. Protects formylmethionyl-tRNA from spontaneous hydrolysis and promotes its binding to the 30S ribosomal subunits. Also involved in the hydrolysis of GTP during the formation of the 70S ribosomal complex. The sequence is that of Translation initiation factor IF-2 from Pseudomonas aeruginosa (strain UCBPP-PA14).